The chain runs to 423 residues: AP-1 complex subunit mu-2 (423 aa).

The MHD domain maps to 168-421 (KNEVFIDVIE…ITQSGDYQLR (254 aa)).

The protein belongs to the adaptor complexes medium subunit family. As to quaternary structure, adaptor protein complex 1 (AP-1) is a heterotetramer composed of two large adaptins (gamma-type subunit AP1G1 and beta-type subunit AP1B1), a medium adaptin (mu-type subunit AP1M1 or AP1M2) and a small adaptin (sigma-type subunit AP1S1 or AP1S2 or AP1S3). Interacts with P2X4. In terms of processing, phosphorylation of membrane-bound AP1M1/AP1M2 increases its affinity for sorting signals.

The protein resides in the golgi apparatus. It is found in the cytoplasmic vesicle. The protein localises to the clathrin-coated vesicle membrane. Subunit of clathrin-associated adaptor protein complex 1 that plays a role in protein sorting in the trans-Golgi network (TGN) and endosomes. The AP complexes mediate the recruitment of clathrin to membranes and the recognition of sorting signals within the cytosolic tails of transmembrane cargo molecules. The chain is AP-1 complex subunit mu-2 (AP1M2) from Homo sapiens (Human).